A 304-amino-acid chain; its full sequence is uncharacterized protein (304 aa).

A signal peptide spans 1–15; that stretch reads MTRPRPPLGPAMAGA. The Thioredoxin domain occupies 28-151; it reads NAAASTDADR…LSRWVDSLLS (124 aa).

This is an uncharacterized protein from Mycobacterium bovis (strain ATCC BAA-935 / AF2122/97).